Consider the following 54-residue polypeptide: UPF0391 membrane protein PFL_0093 (54 aa).

A run of 2 helical transmembrane segments spans residues 4 to 24 and 29 to 49; these read WAITFLIIAIVAAVLGFGGIA and GIAKILFVVFLVMFIASFFFG.

It belongs to the UPF0391 family.

Its subcellular location is the cell membrane. The polypeptide is UPF0391 membrane protein PFL_0093 (Pseudomonas fluorescens (strain ATCC BAA-477 / NRRL B-23932 / Pf-5)).